Here is a 941-residue protein sequence, read N- to C-terminus: Cilia- and flagella-associated protein 69 (941 aa).

Over residues 1-10 (MWTEEAAATA) the composition is skewed to low complexity. A disordered region spans residues 1–23 (MWTEEAAATAEARESGIRNKSSS).

It localises to the cell projection. The protein localises to the cilium. Its subcellular location is the flagellum. Its function is as follows. Cilium- and flagellum-associated protein. In the olfactory epithelium, regulates the speed of activation and termination of the odor response and thus contributes to the robustness of olfactory transduction pathways. Required for sperm flagellum assembly and stability. The polypeptide is Cilia- and flagella-associated protein 69 (Papio anubis (Olive baboon)).